We begin with the raw amino-acid sequence, 646 residues long: Serine/threonine-protein kinase PLK3 (646 aa).

Residues 1–35 are disordered; sequence MEPAAGFLSPRPFQRAAAAPAPPAGPGPPPSALRG. The span at 10–19 shows a compositional bias: low complexity; it reads PRPFQRAAAA. Over residues 20-31 the composition is skewed to pro residues; sequence PAPPAGPGPPPS. One can recognise a Protein kinase domain in the interval 62–314; it reads YLKGRLLGKG…IDQILRHDFF (253 aa). Residues 68-76 and Lys91 each bind ATP; that span reads LGKGGFARC. Asp185 functions as the Proton acceptor in the catalytic mechanism. Residues 381 to 417 are disordered; that stretch reads GHQDARPEAPAASGPAPVSLVETAPEDSSPRGTLASS. POLO box domains are found at residues 463–541 and 562–645; these read WVSK…YMEQ and LLLQ…DRSP.

The protein belongs to the protein kinase superfamily. Ser/Thr protein kinase family. CDC5/Polo subfamily. In terms of assembly, interacts (via the POLO-box domain) with CIB1; leading to inhibit PLK3 kinase activity. Interacts with GOLGB1. Post-translationally, phosphorylated in an ATM-dependent manner following DNA damage. Phosphorylated as cells enter mitosis and dephosphorylated as cells exit mitosis. As to expression, transcripts are highly detected in placenta, lung, followed by skeletal muscle, heart, pancreas, ovaries and kidney and weakly detected in liver and brain. May have a short half-live. In cells of hematopoietic origin, strongly and exclusively detected in terminally differentiated macrophages. Transcript expression appears to be down-regulated in primary lung tumor.

The protein resides in the cytoplasm. Its subcellular location is the nucleus. It is found in the nucleolus. The protein localises to the golgi apparatus. It localises to the cytoskeleton. The protein resides in the microtubule organizing center. Its subcellular location is the centrosome. The enzyme catalyses L-seryl-[protein] + ATP = O-phospho-L-seryl-[protein] + ADP + H(+). It carries out the reaction L-threonyl-[protein] + ATP = O-phospho-L-threonyl-[protein] + ADP + H(+). Functionally, serine/threonine-protein kinase involved in cell cycle regulation, response to stress and Golgi disassembly. Polo-like kinases act by binding and phosphorylating proteins that are already phosphorylated on a specific motif recognized by the POLO box domains. Phosphorylates ATF2, BCL2L1, CDC25A, CDC25C, CHEK2, HIF1A, JUN, p53/TP53, p73/TP73, PTEN, TOP2A and VRK1. Involved in cell cycle regulation: required for entry into S phase and cytokinesis. Phosphorylates BCL2L1, leading to regulate the G2 checkpoint and progression to cytokinesis during mitosis. Plays a key role in response to stress: rapidly activated upon stress stimulation, such as ionizing radiation, reactive oxygen species (ROS), hyperosmotic stress, UV irradiation and hypoxia. Involved in DNA damage response and G1/S transition checkpoint by phosphorylating CDC25A, p53/TP53 and p73/TP73. Phosphorylates p53/TP53 in response to reactive oxygen species (ROS), thereby promoting p53/TP53-mediated apoptosis. Phosphorylates CHEK2 in response to DNA damage, promoting the G2/M transition checkpoint. Phosphorylates the transcription factor p73/TP73 in response to DNA damage, leading to inhibit p73/TP73-mediated transcriptional activation and pro-apoptotic functions. Phosphorylates HIF1A and JUN is response to hypoxia. Phosphorylates ATF2 following hyperosmotic stress in corneal epithelium. Also involved in Golgi disassembly during the cell cycle: part of a MEK1/MAP2K1-dependent pathway that induces Golgi fragmentation during mitosis by mediating phosphorylation of VRK1. May participate in endomitotic cell cycle, a form of mitosis in which both karyokinesis and cytokinesis are interrupted and is a hallmark of megakaryocyte differentiation, via its interaction with CIB1. In Homo sapiens (Human), this protein is Serine/threonine-protein kinase PLK3 (PLK3).